The chain runs to 600 residues: KIF-binding protein (600 aa).

Positions 384–434 (KAENEATEYSKIMQDYAEAYEHIAFFEENPENQAKMQKRRAKYLEDLLDLL) form a coiled coil.

It belongs to the KIF-binding protein family.

It is found in the cytoplasm. The protein localises to the cytoskeleton. This chain is KIF-binding protein, found in Drosophila melanogaster (Fruit fly).